Consider the following 335-residue polypeptide: MGNCLHPAELSPSTQNSSQLNSDLWNFSYDGNDSFPDVDYDANLEAAAPCHSCNLLDDSALPFFILVSVLGILASGTVLFMFFRPLFHWQLCPGWPVLAQLAVGSALFSIVVPILAPGLGNTRSSALCSLGYCVWYGSAFAQALLLGCHASLGPKLGAGQVPGLTLGLSVGLWGVAALLTLPITLASGASGGLCTPAYSMELKALQATHAVACLAVFVLLPLGLFGAKGLKKALGMGPGPWMNILWAWFIFWWPHGVVLGLDFLVRSKLLLLSTCLAQQALDLLLNLAEALAILHCVATPLLLALFCHQATRTLLPSLPLPEGWSSHLDTLGSES.

Residues Met1–Pro62 are Extracellular-facing. N-linked (GlcNAc...) asparagine glycosylation is found at Asn16, Asn26, and Asn32. Intrachain disulfides connect Cys50–Cys275 and Cys128–Cys194. A helical transmembrane segment spans residues Phe63–Phe83. Topologically, residues Arg84–Gly94 are cytoplasmic. The chain crosses the membrane as a helical span at residues Trp95–Leu115. The Extracellular segment spans residues Ala116–Cys128. A helical membrane pass occupies residues Ser129–Leu152. Topologically, residues Gly153–Thr165 are cytoplasmic. The chain crosses the membrane as a helical span at residues Leu166–Ala186. The Extracellular segment spans residues Ser187–Gln206. The chain crosses the membrane as a helical span at residues Ala207–Ala227. Over Lys228–Asn243 the chain is Cytoplasmic. The chain crosses the membrane as a helical span at residues Ile244 to Leu264. Residues Val265–Asn286 are Extracellular-facing. The chain crosses the membrane as a helical span at residues Leu287–Cys307. Over His308–Ser335 the chain is Cytoplasmic.

This sequence belongs to the G-protein coupled receptor 1 family. Atypical chemokine receptor subfamily. (Microbial infection) Interacts (via N-terminal extracellular domain) with Plasmodium knowlesi Duffy receptor alpha form (DBPalpha) (via region II).

The protein localises to the early endosome. It is found in the recycling endosome. Its subcellular location is the membrane. Its function is as follows. Atypical chemokine receptor that controls chemokine levels and localization via high-affinity chemokine binding that is uncoupled from classic ligand-driven signal transduction cascades, resulting instead in chemokine sequestration, degradation, or transcytosis. Also known as interceptor (internalizing receptor) or chemokine-scavenging receptor or chemokine decoy receptor. Has a promiscuous chemokine-binding profile, interacting with inflammatory chemokines of both the CXC and the CC subfamilies but not with homeostatic chemokines. Acts as a receptor for chemokines including CCL2, CCL5, CCL7, CCL11, CCL13, CCL14, CCL17, CXCL5, CXCL6, IL8/CXCL8, CXCL11, GRO, RANTES, MCP-1 and TARC. May regulate chemokine bioavailability and, consequently, leukocyte recruitment through two distinct mechanisms: when expressed in endothelial cells, it sustains the abluminal to luminal transcytosis of tissue-derived chemokines and their subsequent presentation to circulating leukocytes; when expressed in erythrocytes, serves as blood reservoir of cognate chemokines but also as a chemokine sink, buffering potential surges in plasma chemokine levels. Functionally, (Microbial infection) Acts as a receptor for the malaria parasite Plasmodium knowlesi. This chain is Atypical chemokine receptor 1 (ACKR1), found in Macaca mulatta (Rhesus macaque).